The sequence spans 191 residues: Fe/S biogenesis protein NfuA (191 aa).

Residues cysteine 149 and cysteine 152 each contribute to the [4Fe-4S] cluster site.

This sequence belongs to the NfuA family. Homodimer. The cofactor is [4Fe-4S] cluster.

Its function is as follows. Involved in iron-sulfur cluster biogenesis. Binds a 4Fe-4S cluster, can transfer this cluster to apoproteins, and thereby intervenes in the maturation of Fe/S proteins. Could also act as a scaffold/chaperone for damaged Fe/S proteins. The sequence is that of Fe/S biogenesis protein NfuA from Klebsiella pneumoniae (strain 342).